Consider the following 258-residue polypeptide: MLDLSGKHAFVTGIANNRSIAWGIAQQLHQAGAEIGVSYLPDEKGRFEKKVRELTEPLHPTLVLPGDVQDDAQVDALFHSVKEKWGKLDILIHCLAFADKSGLTGNYTDIPKEAFSQAMEISTYSLGRLARGAKPLMTNGGSIITLTYFGGVKVIPNYNLMGVAKAGLEMTVRYLAAELGPQNIRVNGISAGPIRTLASSAVGGILDMIHHVEEVAPLKRTVTQTEVGNTAAFLASDLSSGITGQIIYVDSGYEIMGM.

NAD(+)-binding positions include G13, 19–20, 67–68, and L95; these read SI and DV. Residue A98 participates in substrate binding. Residues Y148 and Y158 each act as proton acceptor in the active site. NAD(+) is bound by residues K165 and 194–198; that span reads IRTLA.

It belongs to the short-chain dehydrogenases/reductases (SDR) family. FabI subfamily. As to quaternary structure, homotetramer.

It catalyses the reaction a 2,3-saturated acyl-[ACP] + NAD(+) = a (2E)-enoyl-[ACP] + NADH + H(+). Its pathway is lipid metabolism; fatty acid biosynthesis. Catalyzes the reduction of a carbon-carbon double bond in an enoyl moiety that is covalently linked to an acyl carrier protein (ACP). Involved in the elongation cycle of fatty acid which are used in the lipid metabolism. The protein is Enoyl-[acyl-carrier-protein] reductase [NADH] FabI (fabI) of Synechocystis sp. (strain ATCC 27184 / PCC 6803 / Kazusa).